We begin with the raw amino-acid sequence, 680 residues long: Putative cyclin-dependent serine/threonine-protein kinase DDB_G0272797/DDB_G0274007 (680 aa).

In terms of domain architecture, Protein kinase spans 4–381 (YIILSKCGQG…SLEALEHPWF (378 aa)). Residues 10–18 (CGQGTYGSV) and Lys33 each bind ATP. Asp125 (proton acceptor) is an active-site residue. 4 disordered regions span residues 243–299 (QQQQ…LQSP), 409–444 (RQLQ…QRQH), 483–507 (LAQH…QHQQ), and 597–680 (QQQQ…KSNG). The span at 257-286 (NNNNNNNNNNNNNNNNNNNNNNNNNNNNNN) shows a compositional bias: low complexity. A compositionally biased stretch (polar residues) spans 287–297 (KYNNISTSCLQ). Low complexity-rich tracts occupy residues 410–444 (QLQQ…QRQH), 483–494 (LAQHQQYNSQQH), and 597–616 (QQQQ…PPQH). Basic residues predominate over residues 617–631 (QHQHQHQHQHQHQHQ). Residues 632–642 (HQPQPQHQHQP) show a composition bias toward low complexity. The segment covering 643–655 (QPQPQPTPTPTPT) has biased composition (pro residues). Low complexity predominate over residues 656-680 (STPTTTTIPPTITTTIQPTISKSNG).

This sequence belongs to the protein kinase superfamily. CMGC Ser/Thr protein kinase family. CDC2/CDKX subfamily.

It carries out the reaction L-seryl-[protein] + ATP = O-phospho-L-seryl-[protein] + ADP + H(+). It catalyses the reaction L-threonyl-[protein] + ATP = O-phospho-L-threonyl-[protein] + ADP + H(+). This Dictyostelium discoideum (Social amoeba) protein is Putative cyclin-dependent serine/threonine-protein kinase DDB_G0272797/DDB_G0274007.